The primary structure comprises 1067 residues: Glycine--tRNA ligase, chloroplastic/mitochondrial 2 (1067 aa).

A chloroplast and mitochondrion-targeting transit peptide spans 1 to 50; the sequence is MAILHFSLPLIVSFLRPHASPRFFLLPRSLSQSPFLSRRRFHRTSAVSSA. E513 serves as a coordination point for substrate. Residues 589–596, 619–624, 744–745, and 859–862 each bind ATP; these read RNSGINIE, LVVPQN, RL, and GLRR. Substrate is bound at residue 624 to 628; sequence NLLNE. Substrate is bound at residue 855–859; sequence NDPFG.

This sequence belongs to the class-II aminoacyl-tRNA synthetase family. In terms of assembly, homodimer.

It is found in the plastid. Its subcellular location is the chloroplast. It localises to the mitochondrion. The catalysed reaction is tRNA(Gly) + glycine + ATP = glycyl-tRNA(Gly) + AMP + diphosphate. Catalyzes the attachment of glycine to tRNA(Gly). Is also able produce diadenosine tetraphosphate (Ap4A), a universal pleiotropic signaling molecule needed for cell regulation pathways, by direct condensation of 2 ATPs. In Arabidopsis thaliana (Mouse-ear cress), this protein is Glycine--tRNA ligase, chloroplastic/mitochondrial 2.